We begin with the raw amino-acid sequence, 637 residues long: Neurexin-3-beta (637 aa).

Residues 1 to 35 (MHLRIHARRSPPRRPAWTLGIWFLFWGCIVSSVWS) form the signal peptide. At 36–562 (SSNVASSSST…EVIRESSSTT (527 aa)) the chain is on the extracellular side. Residues 43–52 (SSTSSSPGSH) show a composition bias toward low complexity. The disordered stretch occupies residues 43–65 (SSTSSSPGSHSQHEHHFHGSKHH). Residues 55 to 65 (HEHHFHGSKHH) are compositionally biased toward basic residues. In terms of domain architecture, Laminin G-like spans 85–255 (ATYIFGKSGG…NPNIKINGSV (171 aa)). Ca(2+) contacts are provided by D137 and I154. The N-linked (GlcNAc...) asparagine glycan is linked to N184. Residues I206 and N208 each contribute to the Ca(2+) site. Residues N252 and N296 are each glycosylated (N-linked (GlcNAc...) asparagine). The tract at residues 289–310 (ATTTTRKNRSTASIQPTSDDLV) is disordered. Residues 298-310 (STASIQPTSDDLV) are compositionally biased toward polar residues. O-linked (Xyl...) (heparan sulfate) serine glycosylation occurs at S312. A helical transmembrane segment spans residues 563–583 (GMVVGIVAAAALCILILLYAM). Over 584 to 637 (YKYRNRDEGSYQVDETRNYISNSAQSNGTLMKEKQQSSKSGHKKQKNKDREYYV) the chain is Cytoplasmic. The disordered stretch occupies residues 605-637 (NSAQSNGTLMKEKQQSSKSGHKKQKNKDREYYV).

It belongs to the neurexin family. In terms of assembly, weakly interacts with CBLN1 and CBLN2. Very weak binding, if any, to CBLN4. Specific isoforms bind neuroligins NLGN1, NLGN2 and NLGN3. Interacts with CLSTN3. Post-translationally, processed by alpha-secretase leading to the formation of an extracellular soluble protein as well as a C-terminal membrane-embedded fragment (CTF). Proteolysis of these CTFs by gamma-secretase releases intracellular domains (ICDs) and extracellular peptides. O-glycosylated; contains heparan sulfate. Heparan sulfate attachment is required for synapse development by mediating interactions with neuroligins. Expressed in the blood vessel walls (at protein level).

It is found in the presynaptic cell membrane. In terms of biological role, neuronal cell surface protein that may be involved in cell recognition and cell adhesion. May mediate intracellular signaling. Functions as part of a trans-synaptic complex by binding to cerebellins and postsynaptic GRID1. This interaction helps regulate the activity of NMDA and AMPA receptors at hippocampal synapses without affecting synapse formation. NRXN3B-CBLN2-GRID1 complex transduce presynaptic signals into postsynaptic AMPAR response. In Homo sapiens (Human), this protein is Neurexin-3-beta.